A 230-amino-acid polypeptide reads, in one-letter code: Small ribosomal subunit protein uS3 (230 aa).

Residues 39 to 107 enclose the KH type-2 domain; it reads VRKFLVEKLQ…PAQINIAEIR (69 aa).

Belongs to the universal ribosomal protein uS3 family. As to quaternary structure, part of the 30S ribosomal subunit. Forms a tight complex with proteins S10 and S14.

Binds the lower part of the 30S subunit head. Binds mRNA in the 70S ribosome, positioning it for translation. The polypeptide is Small ribosomal subunit protein uS3 (Shewanella baltica (strain OS223)).